The following is a 220-amino-acid chain: Ribonuclease HII (220 aa).

One can recognise an RNase H type-2 domain in the interval 32 to 220; sequence KHIAGIDEAG…FAPIKGRFDC (189 aa). 3 residues coordinate a divalent metal cation: aspartate 38, glutamate 39, and aspartate 130.

Belongs to the RNase HII family. The cofactor is Mn(2+). It depends on Mg(2+) as a cofactor.

The protein resides in the cytoplasm. The catalysed reaction is Endonucleolytic cleavage to 5'-phosphomonoester.. Endonuclease that specifically degrades the RNA of RNA-DNA hybrids. The polypeptide is Ribonuclease HII (Brucella suis (strain ATCC 23445 / NCTC 10510)).